We begin with the raw amino-acid sequence, 354 residues long: Ferrochelatase (354 aa).

2 residues coordinate Fe cation: His204 and Glu306.

The protein belongs to the ferrochelatase family.

It is found in the cytoplasm. The enzyme catalyses heme b + 2 H(+) = protoporphyrin IX + Fe(2+). Its pathway is porphyrin-containing compound metabolism; protoheme biosynthesis; protoheme from protoporphyrin-IX: step 1/1. Catalyzes the ferrous insertion into protoporphyrin IX. The chain is Ferrochelatase from Coxiella burnetii (strain RSA 493 / Nine Mile phase I).